The chain runs to 263 residues: Microtubule-associated protein RP/EB family member 1 (263 aa).

The Calponin-homology (CH) domain occupies N14 to D116. An EB1 C-terminal domain is found at K180–I250.

It belongs to the MAPRE family.

It localises to the cytoplasm. The protein localises to the cytoskeleton. The protein resides in the microtubule organizing center. It is found in the centrosome. Its subcellular location is the golgi apparatus. It localises to the spindle. The protein localises to the spindle pole. Functionally, plus-end tracking protein (+TIP) that binds to the plus-end of microtubules and regulates the dynamics of the microtubule cytoskeleton. Promotes cytoplasmic microtubule nucleation and elongation. Involved in mitotic spindle positioning by stabilizing microtubules and promoting dynamic connection between astral microtubules and the cortex during mitotic chromosome segregation. The polypeptide is Microtubule-associated protein RP/EB family member 1 (MAPRE1) (Coturnix coturnix (Common quail)).